We begin with the raw amino-acid sequence, 481 residues long: tRNA:m(4)X modification enzyme TRM13 homolog (481 aa).

The segment at 56-83 adopts a CHHC U11-48K-type zinc-finger fold; sequence RILCPLDPKHTVYEDQLAKHLKKCNSRE. Zn(2+) contacts are provided by Cys-59, His-65, His-75, and Cys-79. Positions 113–140 form a coiled coil; the sequence is SLSEEQLENLIKKLRKASEGLNSTHEDH. Disordered stretches follow at residues 296 to 319 and 379 to 414; these read AKRI…SEKD and LEGS…TDSL. Residues 385 to 407 show a composition bias toward basic and acidic residues; sequence TPERKDAQRDENEEHDDGGDRLT.

The protein belongs to the methyltransferase TRM13 family.

The catalysed reaction is cytidine(4) in tRNA(Pro) + S-adenosyl-L-methionine = 2'-O-methylcytidine(4) in tRNA(Pro) + S-adenosyl-L-homocysteine + H(+). It carries out the reaction cytidine(4) in tRNA(Gly)(GCC) + S-adenosyl-L-methionine = 2'-O-methylcytidine(4) in tRNA(Gly)(GCC) + S-adenosyl-L-homocysteine + H(+). The enzyme catalyses adenosine(4) in tRNA(His) + S-adenosyl-L-methionine = 2'-O-methyladenosine(4) in tRNA(His) + S-adenosyl-L-homocysteine + H(+). In terms of biological role, tRNA methylase which 2'-O-methylates cytidine(4) in tRNA(Pro) and tRNA(Gly)(GCC), and adenosine(4) in tRNA(His). This chain is tRNA:m(4)X modification enzyme TRM13 homolog (Trmt13), found in Mus musculus (Mouse).